We begin with the raw amino-acid sequence, 267 residues long: Indole-3-glycerol phosphate synthase (267 aa).

The protein belongs to the TrpC family.

The catalysed reaction is 1-(2-carboxyphenylamino)-1-deoxy-D-ribulose 5-phosphate + H(+) = (1S,2R)-1-C-(indol-3-yl)glycerol 3-phosphate + CO2 + H2O. It participates in amino-acid biosynthesis; L-tryptophan biosynthesis; L-tryptophan from chorismate: step 4/5. The polypeptide is Indole-3-glycerol phosphate synthase (Cupriavidus necator (strain ATCC 17699 / DSM 428 / KCTC 22496 / NCIMB 10442 / H16 / Stanier 337) (Ralstonia eutropha)).